The chain runs to 60 residues: Lantibiotic Pep5 (60 aa).

The propeptide occupies 1-26 (MKNNKNLFDLEIKKETSQNTDELEPQ). Residues 1–29 (MKNNKNLFDLEIKKETSQNTDELEPQTAG) form a disordered region. 2-oxobutanoic acid is present on Thr-27. Residues 35 to 39 (SVKQC) constitute a cross-link (lanthionine (Ser-Cys)). A 2,3-didehydrobutyrine mark is found at Thr-42 and Thr-46. Residues 50 to 53 (TVSC) constitute a cross-link (beta-methyllanthionine (Thr-Cys)). The lanthionine (Ser-Cys) cross-link spans 52-59 (SCKGKNGC).

This sequence belongs to the type A lantibiotic family. In terms of processing, maturation of lantibiotics involves the enzymatic conversion of Thr, and Ser into dehydrated AA and the formation of thioether bonds with cysteine. This is followed by membrane translocation and cleavage of the modified precursor. After proteolysis of the propeptide, the N-terminal 2,3-didehydrobutyrine hydrolyzes to 2-oxobutanoic acid, possibly spontaneously.

Functionally, lanthionine-containing peptide antibiotic (lantibiotic) active on Gram-positive bacteria. The bactericidal activity of lantibiotics is based on depolarization of energized bacterial cytoplasmic membranes, initiated by the formation of aqueous transmembrane pores. The protein is Lantibiotic Pep5 (pepA) of Staphylococcus epidermidis.